Consider the following 209-residue polypeptide: UPF0502 protein mll4256 (209 aa).

It belongs to the UPF0502 family.

This Mesorhizobium japonicum (strain LMG 29417 / CECT 9101 / MAFF 303099) (Mesorhizobium loti (strain MAFF 303099)) protein is UPF0502 protein mll4256.